The following is a 358-amino-acid chain: MNKSMTAKLTQLSVRLEELNRLLSSESITVNLDQYRKLTRERAEIAPVVDLYNAYLQSEQDIHTAQEMAAEAEMREFADAEIRDAKERLVRYGAELQKQLLPKDPNDERNIFLEIRAGTGGDESALFAADLFRMYARFAERQRWQVEIISQSPSDVGGYKEIIAKISGEGAYSKLKFESGGHRVQRVPATETQGRIHTSACTVAVMPEADEIEDVALNPAELRIDTFRASGAGGQHINKTDSAVRITHLPTGIVVECQDGRSQHKNKAQAMSVLAARIRDKQMQEQQSKQAATRKSLVGTGNRSGRIRTYNFPQGRITDHRINLTLYKIEQIMDGDLNELCSALLAEHQAEQLAAMAE.

Gln-235 carries the post-translational modification N5-methylglutamine.

It belongs to the prokaryotic/mitochondrial release factor family. Methylated by PrmC. Methylation increases the termination efficiency of RF1.

It localises to the cytoplasm. Functionally, peptide chain release factor 1 directs the termination of translation in response to the peptide chain termination codons UAG and UAA. The polypeptide is Peptide chain release factor 1 (Nitrosospira multiformis (strain ATCC 25196 / NCIMB 11849 / C 71)).